A 160-amino-acid polypeptide reads, in one-letter code: Cytochrome b6-f complex subunit 4 (160 aa).

The next 3 membrane-spanning stretches (helical) occupy residues 36-56 (LLYIFPVVILGTIACNVGLAI), 95-115 (LLGVLLMASVPLGLFTVPFLE), and 131-151 (TVFLIGTAVALWLGIGATLPI).

The protein belongs to the cytochrome b family. PetD subfamily. In terms of assembly, the 4 large subunits of the cytochrome b6-f complex are cytochrome b6, subunit IV (17 kDa polypeptide, petD), cytochrome f and the Rieske protein, while the 4 small subunits are petG, petL, petM and petN. The complex functions as a dimer.

It localises to the plastid. Its subcellular location is the chloroplast thylakoid membrane. In terms of biological role, component of the cytochrome b6-f complex, which mediates electron transfer between photosystem II (PSII) and photosystem I (PSI), cyclic electron flow around PSI, and state transitions. The chain is Cytochrome b6-f complex subunit 4 from Acorus calamus (Sweet flag).